The chain runs to 409 residues: Dual-specificity RNA methyltransferase RlmN (409 aa).

Catalysis depends on Glu-126, which acts as the Proton acceptor. Positions 132 to 373 constitute a Radical SAM core domain; it reads EEGRGTLCLS…NQAGYASPIR (242 aa). Cys-139 and Cys-384 are oxidised to a cystine. The [4Fe-4S] cluster site is built by Cys-146, Cys-150, and Cys-153. S-adenosyl-L-methionine is bound by residues 210–211, Ser-242, 264–266, and Asn-341; these read GE and SLH. Residue Cys-384 is the S-methylcysteine intermediate of the active site.

This sequence belongs to the radical SAM superfamily. RlmN family. The cofactor is [4Fe-4S] cluster.

Its subcellular location is the cytoplasm. It catalyses the reaction adenosine(2503) in 23S rRNA + 2 reduced [2Fe-2S]-[ferredoxin] + 2 S-adenosyl-L-methionine = 2-methyladenosine(2503) in 23S rRNA + 5'-deoxyadenosine + L-methionine + 2 oxidized [2Fe-2S]-[ferredoxin] + S-adenosyl-L-homocysteine. It carries out the reaction adenosine(37) in tRNA + 2 reduced [2Fe-2S]-[ferredoxin] + 2 S-adenosyl-L-methionine = 2-methyladenosine(37) in tRNA + 5'-deoxyadenosine + L-methionine + 2 oxidized [2Fe-2S]-[ferredoxin] + S-adenosyl-L-homocysteine. In terms of biological role, specifically methylates position 2 of adenine 2503 in 23S rRNA and position 2 of adenine 37 in tRNAs. m2A2503 modification seems to play a crucial role in the proofreading step occurring at the peptidyl transferase center and thus would serve to optimize ribosomal fidelity. This chain is Dual-specificity RNA methyltransferase RlmN, found in Bartonella quintana (strain Toulouse) (Rochalimaea quintana).